The following is a 216-amino-acid chain: ATP-dependent Clp protease proteolytic subunit (216 aa).

S120 functions as the Nucleophile in the catalytic mechanism. The active site involves H145.

The protein belongs to the peptidase S14 family. Fourteen ClpP subunits assemble into 2 heptameric rings which stack back to back to give a disk-like structure with a central cavity, resembling the structure of eukaryotic proteasomes.

It is found in the cytoplasm. The catalysed reaction is Hydrolysis of proteins to small peptides in the presence of ATP and magnesium. alpha-casein is the usual test substrate. In the absence of ATP, only oligopeptides shorter than five residues are hydrolyzed (such as succinyl-Leu-Tyr-|-NHMec, and Leu-Tyr-Leu-|-Tyr-Trp, in which cleavage of the -Tyr-|-Leu- and -Tyr-|-Trp bonds also occurs).. Functionally, cleaves peptides in various proteins in a process that requires ATP hydrolysis. Has a chymotrypsin-like activity. Plays a major role in the degradation of misfolded proteins. In Cupriavidus metallidurans (strain ATCC 43123 / DSM 2839 / NBRC 102507 / CH34) (Ralstonia metallidurans), this protein is ATP-dependent Clp protease proteolytic subunit.